A 346-amino-acid chain; its full sequence is Zinc transporter YKE4 (346 aa).

The Extracellular portion of the chain corresponds to 1–2; the sequence is MK. A helical transmembrane segment spans residues 3-23; sequence ASHICSYLLSIAPLVVSHGVH. Topologically, residues 24-69 are cytoplasmic; the sequence is HNRDHGHEANHESKQSFLILKQESIFYSLVCFLQNHLFVLGPRYNA. Residues 70 to 90 traverse the membrane as a helical segment; sequence IVAILIIQLMPCLFVLFVPGL. The Extracellular segment spans residues 91-99; it reads RKNDRASLT. The helical transmembrane segment at 100 to 120 threads the bilayer; sequence LSLLVSFSLGTLLGDILLHVI. Residues 121-126 are Cytoplasmic-facing; that stretch reads PESLSG. A helical transmembrane segment spans residues 127–147; it reads VTDVTMVGGAIFLGFISFLTL. The Extracellular segment spans residues 148–202; that stretch reads DKTMRILSGTSNDDGSIHSHSHSHTPQQTAEKKAGFNMSAYLNVISGIAHHITDG. The N-linked (GlcNAc...) asparagine glycan is linked to N184. A helical membrane pass occupies residues 203–223; the sequence is IALATSFYSSTQVGIMTSIAV. Residues 224-252 are Cytoplasmic-facing; the sequence is TFHEIPHELGDFAILLSSGFTFPQAIRAQ. Residues 253-273 traverse the membrane as a helical segment; it reads AVTAFGAVVGTSIGCWMNEIG. N-linked (GlcNAc...) asparagine glycans are attached at residues N274 and N285. Over 274–290 the chain is Extracellular; the sequence is NNSHKATSSSANASELM. A helical transmembrane segment spans residues 291 to 311; the sequence is LPFTAGGLIYIATTSVVPQIL. Residues 312-322 are Cytoplasmic-facing; it reads HSSAPDSKLRE. Residues 323-343 form a helical membrane-spanning segment; that stretch reads FKKWALQLVFIFVGFAVMALM. Residues 344-346 lie on the Extracellular side of the membrane; it reads DEH.

It belongs to the ZIP transporter (TC 2.A.5) family. KE4/Catsup subfamily.

It localises to the endoplasmic reticulum membrane. Its function is as follows. Zinc transporter whose role depends on the zinc status of the cells. It helps to balance zinc levels between the cytosol and the secretory pathway. It transports zinc into the secretory pathway in a zinc-adequate environment and in a high zinc medium. In high zinc medium, transport of zinc into the secretory pathway is a way to eliminate zinc from the cytosol. Under low cytosolic zinc conditions, it removes zinc from the secretory pathway and acts as a zinc importer that helps to alleviate ER stress. The chain is Zinc transporter YKE4 (YKE4) from Saccharomyces cerevisiae (strain ATCC 204508 / S288c) (Baker's yeast).